The sequence spans 106 residues: MKTFLLYAVTAVAEIVGCYLPWRWLKEGGSIWLLVPGALSLALFAWLLTLHGTAAGRVYAAYGGVYVAVAIAWLWCVDKVRPTLWDAAGVVFTLAGMAIIAFQPRV.

The next 4 helical transmembrane spans lie at 2 to 22 (KTFL…YLPW), 30 to 50 (SIWL…LLTL), 58 to 78 (VYAA…WCVD), and 82 to 102 (PTLW…IIAF).

This sequence belongs to the UPF0060 family.

Its subcellular location is the cell inner membrane. The polypeptide is UPF0060 membrane protein Bxeno_B1021 (Paraburkholderia xenovorans (strain LB400)).